The sequence spans 179 residues: Ribosome maturation factor RimM (179 aa).

The PRC barrel domain occupies 103 to 176 (EPDTYYDHQL…IVEIDPPKGL (74 aa)).

This sequence belongs to the RimM family. Binds ribosomal protein uS19.

Its subcellular location is the cytoplasm. Its function is as follows. An accessory protein needed during the final step in the assembly of 30S ribosomal subunit, possibly for assembly of the head region. Essential for efficient processing of 16S rRNA. May be needed both before and after RbfA during the maturation of 16S rRNA. It has affinity for free ribosomal 30S subunits but not for 70S ribosomes. In Mycobacterium leprae (strain Br4923), this protein is Ribosome maturation factor RimM.